Reading from the N-terminus, the 345-residue chain is Protein TRIGALACTOSYLDIACYLGLYCEROL 3, chloroplastic (345 aa).

The N-terminal 46 residues, methionine 1–cysteine 46, are a transit peptide targeting the chloroplast. The ABC transporter domain occupies isoleucine 85–threonine 336. Glycine 117–serine 124 contacts ATP.

Belongs to the ABC transporter superfamily. ABCI family. As to quaternary structure, catalytic subunit of the TGD complex, a lipid translocator at the inner chloroplast envelope membrane made of TGD1, TGD2 and TGD3. Interacts with TGD1 and TGD2 with an overall subunit stoichiometry of 2 TGD1, 2 TGD3 and 8 to 12 TGD2. Interacts with TGD5.

It localises to the plastid. It is found in the chloroplast stroma. In terms of biological role, ATPase transporter involved in lipid transfer from the endoplasmic reticulum (ER) to plastids, and necessary for thylakoids formation. Not involved in transition metal transport pathways. The chain is Protein TRIGALACTOSYLDIACYLGLYCEROL 3, chloroplastic from Arabidopsis thaliana (Mouse-ear cress).